The sequence spans 348 residues: Lysophosphatidic acid receptor 2 (348 aa).

Residues 1–30 lie on the Extracellular side of the membrane; sequence MGQCYYNETIGFFYNNSGKELSLHWRPKDV. 2 N-linked (GlcNAc...) asparagine glycosylation sites follow: Asn-7 and Asn-15. The chain crosses the membrane as a helical span at residues 31–51; it reads VVVALGLTVSVLVLLTNLLVI. Residues 52–66 lie on the Cytoplasmic side of the membrane; the sequence is AAIASNRRFHQPIYY. The chain crosses the membrane as a helical span at residues 67-87; the sequence is LLGNLAAADLFAGMAYLFLMF. The Extracellular portion of the chain corresponds to 88–104; that stretch reads HTGPRTARLSIKGWFLR. A helical transmembrane segment spans residues 105–124; that stretch reads QGLLDTSLTASVATLLAIAV. Over 125–144 the chain is Cytoplasmic; sequence ERHRSVMAVQLHSRLPRGRV. A helical transmembrane segment spans residues 145-165; it reads VTLIVGVWAAALGLGLLPAHF. Over 166–185 the chain is Extracellular; that stretch reads WHCLCDLDSCSRMVPLFSRS. The helical transmembrane segment at 186–206 threads the bilayer; the sequence is YLAAWALSSLLVFLLMVAVYT. The Cytoplasmic portion of the chain corresponds to 207–239; that stretch reads RIFFYVRRRVERMAEHVSCHPRYRETTLSLVKT. A helical membrane pass occupies residues 240-260; the sequence is VVIILGAFVVCWTPGQVVLLL. Residues 261–270 are Extracellular-facing; sequence DGLDCKSCNV. A helical transmembrane segment spans residues 271 to 291; that stretch reads LAVEKYFLLLAEANSLVNAVV. Residues 292 to 348 are Cytoplasmic-facing; sequence YSCRDAEMRRTFRRLLCCMCLRWSSHKSARYSASAQTGASTRIMLPENGRPLMDSTL. Cys-308 carries the S-palmitoyl cysteine lipid modification. The PDZ-binding motif lies at 345-348; that stretch reads DSTL.

The protein belongs to the G-protein coupled receptor 1 family. Interacts with SLC9A3R2/NHERF2, MAGI3 and PLCB3. Interacts with RALA and GRK2. As to expression, most abundantly expressed in testes, kidney, and embryonic brain. Other organs also express the transcript, including heart, lung, spleen, thymus, stomach, and adult brain. Several have little or no expression, including liver, small intestine, and skeletal muscle.

The protein resides in the cell surface. It localises to the cell membrane. Its function is as follows. Receptor for lysophosphatidic acid (LPA), a mediator of diverse cellular activities. Seems to be coupled to the G(i)/G(o), G(12)/G(13), and G(q) families of heteromeric G proteins. Plays a key role in phospholipase C-beta (PLC-beta) signaling pathway Stimulates phospholipase C (PLC) activity in a manner that is independent of RALA activation. In Mus musculus (Mouse), this protein is Lysophosphatidic acid receptor 2.